The sequence spans 340 residues: Myb-related protein Zm1 (340 aa).

2 HTH myb-type domains span residues 11–63 and 64–118; these read KVGL…INYL and RPDL…KKKV. 2 consecutive DNA-binding regions (H-T-H motif) follow at residues 39–63 and 91–114; these read WRALPKQAGLLRCGKSCRLRWINYL and WSKIAACLPGRTDNEIKNVWNTHL. Positions 116 to 126 are enriched in basic residues; sequence KKVAQREKKKA. Disordered stretches follow at residues 116–173 and 190–209; these read KKVA…DATD and DGAPPAAQPMPSPSSSSSLT. Over residues 133–166 the composition is skewed to low complexity; it reads AGTPATAPLSSATSSTTTHNSSGGSDSGDQCGTS.

It localises to the nucleus. In terms of biological role, transcription factor that positively regulates genes involved in anthocyanin biosynthesis such as A1. This is Myb-related protein Zm1 from Zea mays (Maize).